Here is a 484-residue protein sequence, read N- to C-terminus: Probable glycine dehydrogenase (decarboxylating) subunit 2 (484 aa).

K264 carries the post-translational modification N6-(pyridoxal phosphate)lysine.

Belongs to the GcvP family. C-terminal subunit subfamily. As to quaternary structure, the glycine cleavage system is composed of four proteins: P, T, L and H. In this organism, the P 'protein' is a heterodimer of two subunits. Requires pyridoxal 5'-phosphate as cofactor.

The enzyme catalyses N(6)-[(R)-lipoyl]-L-lysyl-[glycine-cleavage complex H protein] + glycine + H(+) = N(6)-[(R)-S(8)-aminomethyldihydrolipoyl]-L-lysyl-[glycine-cleavage complex H protein] + CO2. The glycine cleavage system catalyzes the degradation of glycine. The P protein binds the alpha-amino group of glycine through its pyridoxal phosphate cofactor; CO(2) is released and the remaining methylamine moiety is then transferred to the lipoamide cofactor of the H protein. The chain is Probable glycine dehydrogenase (decarboxylating) subunit 2 from Legionella pneumophila subsp. pneumophila (strain Philadelphia 1 / ATCC 33152 / DSM 7513).